The primary structure comprises 308 residues: Ribosomal RNA small subunit methyltransferase H (308 aa).

S-adenosyl-L-methionine contacts are provided by residues 35–37, aspartate 55, phenylalanine 79, aspartate 100, and glutamine 107; that span reads GGH.

The protein belongs to the methyltransferase superfamily. RsmH family.

Its subcellular location is the cytoplasm. The catalysed reaction is cytidine(1402) in 16S rRNA + S-adenosyl-L-methionine = N(4)-methylcytidine(1402) in 16S rRNA + S-adenosyl-L-homocysteine + H(+). Its function is as follows. Specifically methylates the N4 position of cytidine in position 1402 (C1402) of 16S rRNA. The protein is Ribosomal RNA small subunit methyltransferase H of Dechloromonas aromatica (strain RCB).